The chain runs to 481 residues: uncharacterized protein (481 aa).

Residues 1–18 (MSRLPSKTKYHSSHRSLN) show a composition bias toward basic residues. Positions 1 to 37 (MSRLPSKTKYHSSHRSLNRKTPLLQRSSETNSLRESG) are disordered. Polar residues predominate over residues 24–34 (LQRSSETNSLR). A run of 2 helical transmembrane segments spans residues 172–191 (SIST…AGAI) and 195–214 (AAAG…YLCW).

The protein resides in the membrane. This is an uncharacterized protein from Coxiella burnetii (strain RSA 493 / Nine Mile phase I).